The following is a 597-amino-acid chain: DNA primase (597 aa).

Zn(2+) contacts are provided by cysteine 40, histidine 43, cysteine 61, and cysteine 64. The CHC2-type zinc finger occupies 40 to 64; it reads CPFHGEKTPSFSVSPEKQIFHCFGC. Residues 262–342 enclose the Toprim domain; that stretch reads QEALLVEGFA…RVKVASLPNG (81 aa). Glutamate 268, aspartate 311, and aspartate 313 together coordinate Mg(2+). Over residues 429-447 the composition is skewed to basic and acidic residues; sequence LSRSQRERTKPREAPDGET. The disordered stretch occupies residues 429–448; the sequence is LSRSQRERTKPREAPDGETA.

Belongs to the DnaG primase family. Monomer. Interacts with replicative helicase DnaB, as DnaB(6):DnaG(3). A stable complex DnaI(6):DnaB(6):DnaG(3) fragment can be isolated; DnaI and DnaG do not contact each other (DnaI in this complex is derived from B.subtilis). The cofactor is Zn(2+). Mg(2+) serves as cofactor.

The enzyme catalyses ssDNA + n NTP = ssDNA/pppN(pN)n-1 hybrid + (n-1) diphosphate.. Functionally, RNA polymerase that catalyzes the synthesis of short RNA molecules used as primers for DNA polymerase during DNA replication. The chain is DNA primase from Geobacillus stearothermophilus (Bacillus stearothermophilus).